The chain runs to 733 residues: Phosphoribosylformylglycinamidine synthase subunit PurL (733 aa).

The active site involves His-32. Position 35 (Tyr-35) interacts with ATP. Glu-81 is a binding site for Mg(2+). Substrate is bound by residues 82–85 (SHNH) and Arg-104. The active-site Proton acceptor is His-83. Asp-105 is a Mg(2+) binding site. Gln-230 provides a ligand contact to substrate. Mg(2+) is bound at residue Asp-258. Position 301–303 (301–303 (ESQ)) interacts with substrate. Positions 482 and 519 each coordinate ATP. Asn-520 provides a ligand contact to Mg(2+). Ser-522 provides a ligand contact to substrate.

It belongs to the FGAMS family. As to quaternary structure, monomer. Part of the FGAM synthase complex composed of 1 PurL, 1 PurQ and 2 PurS subunits.

The protein localises to the cytoplasm. The catalysed reaction is N(2)-formyl-N(1)-(5-phospho-beta-D-ribosyl)glycinamide + L-glutamine + ATP + H2O = 2-formamido-N(1)-(5-O-phospho-beta-D-ribosyl)acetamidine + L-glutamate + ADP + phosphate + H(+). The protein operates within purine metabolism; IMP biosynthesis via de novo pathway; 5-amino-1-(5-phospho-D-ribosyl)imidazole from N(2)-formyl-N(1)-(5-phospho-D-ribosyl)glycinamide: step 1/2. Functionally, part of the phosphoribosylformylglycinamidine synthase complex involved in the purines biosynthetic pathway. Catalyzes the ATP-dependent conversion of formylglycinamide ribonucleotide (FGAR) and glutamine to yield formylglycinamidine ribonucleotide (FGAM) and glutamate. The FGAM synthase complex is composed of three subunits. PurQ produces an ammonia molecule by converting glutamine to glutamate. PurL transfers the ammonia molecule to FGAR to form FGAM in an ATP-dependent manner. PurS interacts with PurQ and PurL and is thought to assist in the transfer of the ammonia molecule from PurQ to PurL. The chain is Phosphoribosylformylglycinamidine synthase subunit PurL from Methanocaldococcus jannaschii (strain ATCC 43067 / DSM 2661 / JAL-1 / JCM 10045 / NBRC 100440) (Methanococcus jannaschii).